The primary structure comprises 543 residues: tRNA (guanine(37)-N(1))-methyltransferase (543 aa).

The transit peptide at 1–59 (MLKSLCFVIRPAIVSRPQFRLPTIARLSLRQFQNQPQSVGFFTMAPLETRALALSPSAT) directs the protein to the mitochondrion. Residues His-282, 320 to 321 (DL), and 348 to 349 (DG) contribute to the S-adenosyl-L-methionine site. The interval 366–405 (DPAPPPKVSNRQRDREAKEARRKREQAKAAGQPVTETAPM) is disordered. Residue Asn-431 participates in S-adenosyl-L-methionine binding.

It belongs to the class I-like SAM-binding methyltransferase superfamily. TRM5/TYW2 family. As to quaternary structure, monomer.

It localises to the mitochondrion matrix. The protein localises to the nucleus. It is found in the cytoplasm. It carries out the reaction guanosine(37) in tRNA + S-adenosyl-L-methionine = N(1)-methylguanosine(37) in tRNA + S-adenosyl-L-homocysteine + H(+). Its function is as follows. Specifically methylates the N1 position of guanosine-37 in various cytoplasmic and mitochondrial tRNAs. Methylation is not dependent on the nature of the nucleoside 5' of the target nucleoside. This is the first step in the biosynthesis of wybutosine (yW), a modified base adjacent to the anticodon of tRNAs and required for accurate decoding. The chain is tRNA (guanine(37)-N(1))-methyltransferase from Cryptococcus neoformans var. neoformans serotype D (strain JEC21 / ATCC MYA-565) (Filobasidiella neoformans).